The following is a 95-amino-acid chain: Small ribosomal subunit protein uS19 (95 aa).

Positions 76 to 95 are disordered; it reads PTRRFGGHADKKAATKGQVR.

The protein belongs to the universal ribosomal protein uS19 family.

Its function is as follows. Protein S19 forms a complex with S13 that binds strongly to the 16S ribosomal RNA. This chain is Small ribosomal subunit protein uS19, found in Pseudothermotoga lettingae (strain ATCC BAA-301 / DSM 14385 / NBRC 107922 / TMO) (Thermotoga lettingae).